Reading from the N-terminus, the 124-residue chain is MATINQLVNSPRKRSVVKSKVPALKACPQRRGVCTRVYTTTPKKPNSALRKVARVRLTSGFEVTSYIGGEGHNLQEHSVVLIRGGRVKDLPGVRYHIVRGALDTSGVNNRKHGRSKYGTKRPKS.

At D89 the chain carries 3-methylthioaspartic acid. Positions 102–124 (LDTSGVNNRKHGRSKYGTKRPKS) are disordered. Positions 109 to 124 (NRKHGRSKYGTKRPKS) are enriched in basic residues.

The protein belongs to the universal ribosomal protein uS12 family. As to quaternary structure, part of the 30S ribosomal subunit. Contacts proteins S8 and S17. May interact with IF1 in the 30S initiation complex.

With S4 and S5 plays an important role in translational accuracy. Functionally, interacts with and stabilizes bases of the 16S rRNA that are involved in tRNA selection in the A site and with the mRNA backbone. Located at the interface of the 30S and 50S subunits, it traverses the body of the 30S subunit contacting proteins on the other side and probably holding the rRNA structure together. The combined cluster of proteins S8, S12 and S17 appears to hold together the shoulder and platform of the 30S subunit. This is Small ribosomal subunit protein uS12 from Francisella philomiragia subsp. philomiragia (strain ATCC 25017 / CCUG 19701 / FSC 153 / O#319-036).